The following is an 80-amino-acid chain: U6 snRNA-associated Sm-like protein LSm6 (80 aa).

The 73-residue stretch at 7–79 (TPSDFLKQII…VLYISTQKRR (73 aa)) folds into the Sm domain. K59 carries the N6-acetyllysine modification.

Belongs to the snRNP Sm proteins family. SmF/LSm6 subfamily. In terms of assembly, component of the precatalytic spliceosome (spliceosome B complex). Component of the U4/U6-U5 tri-snRNP complex, a building block of the precatalytic spliceosome (spliceosome B complex). The U4/U6-U5 tri-snRNP complex is composed of the U4, U6 and U5 snRNAs and at least PRPF3, PRPF4, PRPF6, PRPF8, PRPF31, SNRNP200, TXNL4A, SNRNP40, SNRPB, SNRPD1, SNRPD2, SNRPD3, SNRPE, SNRPF, SNRPG, DDX23, CD2BP2, PPIH, SNU13, EFTUD2, SART1 and USP39, plus LSM2, LSM3, LSM4, LSM5, LSM6, LSM7 and LSM8. LSM2, LSM3, LSM4, LSM5, LSM6, LSM7 and LSM8 form a heptameric, ring-shaped subcomplex (the LSM2-8 complex) that is part of the U4/U6-U5 tri-snRNP complex and the precatalytic spliceosome. Component of the heptameric LSM1-LSM7 complex, which consists of LSM1, LSM2, LSM3, LSM4, LSM5, LSM6 and LSM7.

It is found in the cytoplasm. Its subcellular location is the nucleus. In terms of biological role, plays a role in pre-mRNA splicing as component of the U4/U6-U5 tri-snRNP complex that is involved in spliceosome assembly, and as component of the precatalytic spliceosome (spliceosome B complex). The heptameric LSM2-8 complex binds specifically to the 3'-terminal U-tract of U6 snRNA. Component of LSm protein complexes, which are involved in RNA processing and may function in a chaperone-like manner, facilitating the efficient association of RNA processing factors with their substrates. Component of the cytoplasmic LSM1-LSM7 complex, which is thought to be involved in mRNA degradation by activating the decapping step in the 5'-to-3' mRNA decay pathway. The chain is U6 snRNA-associated Sm-like protein LSm6 (LSM6) from Homo sapiens (Human).